A 201-amino-acid polypeptide reads, in one-letter code: ATP-dependent Clp protease proteolytic subunit (201 aa).

Catalysis depends on Ser100, which acts as the Nucleophile. The active site involves His125.

The protein belongs to the peptidase S14 family. Component of the chloroplastic Clp protease core complex.

The protein resides in the plastid. The protein localises to the chloroplast stroma. The catalysed reaction is Hydrolysis of proteins to small peptides in the presence of ATP and magnesium. alpha-casein is the usual test substrate. In the absence of ATP, only oligopeptides shorter than five residues are hydrolyzed (such as succinyl-Leu-Tyr-|-NHMec, and Leu-Tyr-Leu-|-Tyr-Trp, in which cleavage of the -Tyr-|-Leu- and -Tyr-|-Trp bonds also occurs).. Cleaves peptides in various proteins in a process that requires ATP hydrolysis. Has a chymotrypsin-like activity. Plays a major role in the degradation of misfolded proteins. The sequence is that of ATP-dependent Clp protease proteolytic subunit from Chloranthus spicatus (Chulantree).